The chain runs to 90 residues: MKILIFIIASFMLIGVECKEGYPMGSDGCKISCVVNNEYCKGQCSYISTQEDKKWKGSDGYCYFWGLACYCTGLPENAKVWDSKTNKCGG.

An N-terminal signal peptide occupies residues 1-18 (MKILIFIIASFMLIGVEC). Residues 19–89 (KEGYPMGSDG…VWDSKTNKCG (71 aa)) enclose the LCN-type CS-alpha/beta domain. 4 disulfide bridges follow: Cys-29/Cys-88, Cys-33/Cys-62, Cys-40/Cys-69, and Cys-44/Cys-71.

This sequence belongs to the long (4 C-C) scorpion toxin superfamily. Sodium channel inhibitor family. Beta subfamily. In terms of tissue distribution, expressed by the venom gland.

It localises to the secreted. Functionally, beta toxins bind voltage-independently at site-4 of sodium channels (Nav) and shift the voltage of activation toward more negative potentials thereby affecting sodium channel activation and promoting spontaneous and repetitive firing. This Rhopalurus junceus (Caribbean blue scorpion) protein is Putative beta-neurotoxin RjAa2f.